Consider the following 176-residue polypeptide: MDLSEPIHDFLLVFLGSGLILGGLGVVLLPNPIYSAFSLGLVLVCTSLFYILSNSYFVAAAQLLIYVGAINVLIIFAVMFMNGSEYYKDFHLWTVGDGITSMVCISLFISLITTISDTSWYGIIWTTRSNQIIEQDFISNSQQIGIHLSTDFFLPFELISIILLVALIGAIAVARQ.

5 helical membrane passes run phenylalanine 10–proline 30, proline 32–leucine 52, alanine 61–methionine 81, leucine 92–isoleucine 112, and phenylalanine 152–alanine 172.

This sequence belongs to the complex I subunit 6 family. In terms of assembly, NDH is composed of at least 16 different subunits, 5 of which are encoded in the nucleus.

Its subcellular location is the plastid. It localises to the chloroplast thylakoid membrane. It catalyses the reaction a plastoquinone + NADH + (n+1) H(+)(in) = a plastoquinol + NAD(+) + n H(+)(out). The enzyme catalyses a plastoquinone + NADPH + (n+1) H(+)(in) = a plastoquinol + NADP(+) + n H(+)(out). Its function is as follows. NDH shuttles electrons from NAD(P)H:plastoquinone, via FMN and iron-sulfur (Fe-S) centers, to quinones in the photosynthetic chain and possibly in a chloroplast respiratory chain. The immediate electron acceptor for the enzyme in this species is believed to be plastoquinone. Couples the redox reaction to proton translocation, and thus conserves the redox energy in a proton gradient. This Nicotiana tabacum (Common tobacco) protein is NAD(P)H-quinone oxidoreductase subunit 6, chloroplastic (ndhG).